The chain runs to 415 residues: Esterase FrsA (415 aa).

Belongs to the FrsA family.

The enzyme catalyses a carboxylic ester + H2O = an alcohol + a carboxylate + H(+). In terms of biological role, catalyzes the hydrolysis of esters. The protein is Esterase FrsA of Serratia proteamaculans (strain 568).